The following is a 308-amino-acid chain: Transaldolase (308 aa).

Lys-125 acts as the Schiff-base intermediate with substrate in catalysis.

It belongs to the transaldolase family. Type 1 subfamily. In terms of assembly, homodimer.

Its subcellular location is the cytoplasm. The catalysed reaction is D-sedoheptulose 7-phosphate + D-glyceraldehyde 3-phosphate = D-erythrose 4-phosphate + beta-D-fructose 6-phosphate. Its pathway is carbohydrate degradation; pentose phosphate pathway; D-glyceraldehyde 3-phosphate and beta-D-fructose 6-phosphate from D-ribose 5-phosphate and D-xylulose 5-phosphate (non-oxidative stage): step 2/3. Functionally, transaldolase is important for the balance of metabolites in the pentose-phosphate pathway. The polypeptide is Transaldolase (Ectopseudomonas mendocina (strain ymp) (Pseudomonas mendocina)).